The sequence spans 272 residues: Phosphatidylglycerol--prolipoprotein diacylglyceryl transferase (272 aa).

4 consecutive transmembrane segments (helical) span residues 15–35, 53–73, 90–110, and 117–137; these read LGPLYVHMYSVFMLAGALVLF, AFAVTSLLIPVILGARLWHVV, IWEGGLGFIGGVFSGLICFFV, and VPPFTFLDALAPGILAALCFA. Arg138 is an a 1,2-diacyl-sn-glycero-3-phospho-(1'-sn-glycerol) binding site. The next 3 helical transmembrane spans lie at 174–194, 199–219, and 237–257; these read FHPIFLYEIILNVFIIVILLV, VFVKTVFPKGSVFAAFLVLYG, and FGLDLNYVGAAAMIIVGVLIA.

The protein belongs to the Lgt family.

It localises to the cell membrane. It catalyses the reaction L-cysteinyl-[prolipoprotein] + a 1,2-diacyl-sn-glycero-3-phospho-(1'-sn-glycerol) = an S-1,2-diacyl-sn-glyceryl-L-cysteinyl-[prolipoprotein] + sn-glycerol 1-phosphate + H(+). The protein operates within protein modification; lipoprotein biosynthesis (diacylglyceryl transfer). In terms of biological role, catalyzes the transfer of the diacylglyceryl group from phosphatidylglycerol to the sulfhydryl group of the N-terminal cysteine of a prolipoprotein, the first step in the formation of mature lipoproteins. The protein is Phosphatidylglycerol--prolipoprotein diacylglyceryl transferase of Tropheryma whipplei (strain Twist) (Whipple's bacillus).